Here is a 141-residue protein sequence, read N- to C-terminus: Large ribosomal subunit protein uL11 (141 aa).

The protein belongs to the universal ribosomal protein uL11 family. Part of the ribosomal stalk of the 50S ribosomal subunit. Interacts with L10 and the large rRNA to form the base of the stalk. L10 forms an elongated spine to which L12 dimers bind in a sequential fashion forming a multimeric L10(L12)X complex. One or more lysine residues are methylated.

Forms part of the ribosomal stalk which helps the ribosome interact with GTP-bound translation factors. The sequence is that of Large ribosomal subunit protein uL11 from Prochlorococcus marinus (strain MIT 9312).